We begin with the raw amino-acid sequence, 280 residues long: L-proline cis-4-hydroxylase (280 aa).

Residues H106, D108, and H154 each coordinate Fe cation. R164 serves as a coordination point for 2-oxoglutarate.

This sequence belongs to the L-proline cis-4-/cis-3-hydroxylase family. Requires Fe(2+) as cofactor.

The catalysed reaction is L-proline + 2-oxoglutarate + O2 = cis-4-hydroxy-L-proline + succinate + CO2. Inhibited by metal ions such as Co(2+), Zn(2+), Cu(2+) or Ni(2+). Is also inhibited by EDTA or diethylpyrocarbonate (DEPC) in vitro. Unlike the procollagen-proline cis-3- and trans-4-hydroxylases from mammals, does not necessarily require L-ascorbate for activity although it does increase the activity of the enzyme. In terms of biological role, dioxygenase that catalyzes the 2-oxoglutarate-dependent selective hydroxylation of free L-proline to cis-4-hydroxy-L-proline (cis-4-Hyp). This chain is L-proline cis-4-hydroxylase, found in Rhizobium meliloti (strain 1021) (Ensifer meliloti).